The following is a 342-amino-acid chain: Phosphate acyltransferase (342 aa).

This sequence belongs to the PlsX family. In terms of assembly, homodimer. Probably interacts with PlsY.

It localises to the cytoplasm. It carries out the reaction a fatty acyl-[ACP] + phosphate = an acyl phosphate + holo-[ACP]. The protein operates within lipid metabolism; phospholipid metabolism. Catalyzes the reversible formation of acyl-phosphate (acyl-PO(4)) from acyl-[acyl-carrier-protein] (acyl-ACP). This enzyme utilizes acyl-ACP as fatty acyl donor, but not acyl-CoA. The sequence is that of Phosphate acyltransferase from Shewanella loihica (strain ATCC BAA-1088 / PV-4).